Here is a 418-residue protein sequence, read N- to C-terminus: eIF5-mimic protein 2 (418 aa).

The span at 1-14 (MNQKQQKPTLSGQR) shows a compositional bias: polar residues. The segment at 1-25 (MNQKQQKPTLSGQRFKTRKRDEKER) is disordered. One can recognise a W2 domain in the interval 246–413 (NQQTIGARKE…KNAEEESESE (168 aa)).

Belongs to the BZW family.

Functionally, translation initiation regulator which may repress repeat-associated non-AUG (RAN) initiated translation probably by acting as a competitive inhibitor of eukaryotic translation initiation factor 5 (EIF5) function. Enhances histone H4 gene transcription but does not seem to bind DNA directly. The polypeptide is eIF5-mimic protein 2 (BZW1) (Gallus gallus (Chicken)).